The sequence spans 185 residues: V-type ATP synthase subunit E (185 aa).

This sequence belongs to the V-ATPase E subunit family.

In terms of biological role, produces ATP from ADP in the presence of a proton gradient across the membrane. This chain is V-type ATP synthase subunit E, found in Deinococcus radiodurans (strain ATCC 13939 / DSM 20539 / JCM 16871 / CCUG 27074 / LMG 4051 / NBRC 15346 / NCIMB 9279 / VKM B-1422 / R1).